Here is a 337-residue protein sequence, read N- to C-terminus: Fructose-1,6-bisphosphatase class 1 (337 aa).

Residues glutamate 89, aspartate 112, leucine 114, and aspartate 115 each contribute to the Mg(2+) site. Substrate is bound by residues 115 to 118 (DGSS), asparagine 208, tyrosine 241, and lysine 271. Position 277 (glutamate 277) interacts with Mg(2+).

The protein belongs to the FBPase class 1 family. In terms of assembly, homotetramer. Mg(2+) serves as cofactor.

Its subcellular location is the cytoplasm. It catalyses the reaction beta-D-fructose 1,6-bisphosphate + H2O = beta-D-fructose 6-phosphate + phosphate. The protein operates within carbohydrate biosynthesis; gluconeogenesis. This is Fructose-1,6-bisphosphatase class 1 from Yersinia enterocolitica serotype O:8 / biotype 1B (strain NCTC 13174 / 8081).